We begin with the raw amino-acid sequence, 465 residues long: tRNA (guanine(37)-N(1))-methyltransferase (465 aa).

S-adenosyl-L-methionine contacts are provided by residues H189, 227–228 (DL), and 255–256 (DA). A disordered region spans residues 283 to 362 (YPKEGVPANE…GPGPPPSKPW (80 aa)). The span at 291–320 (NENSSSNGNHNDVREGSQNGANESSVASTT) shows a compositional bias: polar residues. Basic residues predominate over residues 343–352 (TKRRNNKRVR). Position 371 (N371) interacts with S-adenosyl-L-methionine.

This sequence belongs to the class I-like SAM-binding methyltransferase superfamily. TRM5/TYW2 family. Monomer.

The protein localises to the mitochondrion matrix. Its subcellular location is the nucleus. It is found in the cytoplasm. It carries out the reaction guanosine(37) in tRNA + S-adenosyl-L-methionine = N(1)-methylguanosine(37) in tRNA + S-adenosyl-L-homocysteine + H(+). Its function is as follows. Specifically methylates the N1 position of guanosine-37 in various cytoplasmic and mitochondrial tRNAs. Methylation is not dependent on the nature of the nucleoside 5' of the target nucleoside. This is the first step in the biosynthesis of wybutosine (yW), a modified base adjacent to the anticodon of tRNAs and required for accurate decoding. This is tRNA (guanine(37)-N(1))-methyltransferase from Sorghum bicolor (Sorghum).